A 433-amino-acid polypeptide reads, in one-letter code: Acetyl-CoA-benzylalcohol acetyltransferase (433 aa).

Active-site proton acceptor residues include His152 and Asp377.

It belongs to the plant acyltransferase family. In terms of processing, the N-terminus is blocked. As to expression, expressed in petals, style, sepals and stamens. Very low expression in stigma and not detected in leaves.

The catalysed reaction is benzyl alcohol + acetyl-CoA = benzyl acetate + CoA. It catalyses the reaction (E)-cinnamyl alcohol + acetyl-CoA = (E)-cinnamyl acetate + CoA. Its function is as follows. Involved in the biosynthesis of benzyl acetate, a major constituent of the floral scent. Can use benzylalcohol, cinnamylalcohol, 3-cis-hexene-1-ol or heptanol as substrates. Has some activity with 2-phenylethanol and 2-naphtalene-ethanol, but no activity with linalool, 2-hydroxybenzylalcohol, 3-hydroxybenzylalcohol or 4-hydroxybenzylalcohol. The protein is Acetyl-CoA-benzylalcohol acetyltransferase (BEAT) of Clarkia breweri (Fairy fans).